The following is a 275-amino-acid chain: NADPH-dependent 7-cyano-7-deazaguanine reductase (275 aa).

81-83 contacts substrate; the sequence is IES. NADPH is bound at residue 83–84; sequence SK. The Thioimide intermediate role is filled by Cys-181. Asp-188 (proton donor) is an active-site residue. 220-221 is a binding site for substrate; it reads HE. Residue 249–250 participates in NADPH binding; that stretch reads RG.

The protein belongs to the GTP cyclohydrolase I family. QueF type 2 subfamily. As to quaternary structure, homodimer.

The protein localises to the cytoplasm. It carries out the reaction 7-aminomethyl-7-carbaguanine + 2 NADP(+) = 7-cyano-7-deazaguanine + 2 NADPH + 3 H(+). It participates in tRNA modification; tRNA-queuosine biosynthesis. In terms of biological role, catalyzes the NADPH-dependent reduction of 7-cyano-7-deazaguanine (preQ0) to 7-aminomethyl-7-deazaguanine (preQ1). This Xylella fastidiosa (strain 9a5c) protein is NADPH-dependent 7-cyano-7-deazaguanine reductase.